The following is a 266-amino-acid chain: Gasdermin bGSDM (266 aa).

Residue Cys-6 is the site of S-palmitoyl cysteine attachment. The next 4 membrane-spanning stretches (beta stranded) occupy residues Ile-70–Phe-86, Ala-99–Ser-117, Ala-163–Ala-180, and Leu-189–Phe-205. Positions Gly-245–Thr-266 are C-terminal region.

This sequence belongs to the bacterial gasdermin family. Monomer. In terms of assembly, forms large, homooligomeric ring-shaped pores when inserted in membranes. Post-translationally, cleavage by the adjacently encoded protease (probably ISF6_0256) predicted to occur between Glu-244 and Gly-245 relieves autoinhibition, releasing the N-terminus which initiates loss of cell integrity. In terms of processing, palmitoylation helps stabilize the inactive state; may self palmitoylate. Palmitoylation plays a significant role in pore formation.

It localises to the cytoplasm. Its subcellular location is the cell inner membrane. The full-length protein before cleavage is inactive: intramolecular interactions between the N-terminal domain and the C-terminal region as well as the lipid modification, mediate autoinhibition. The pyroptosis-like-inducing activity is carried by the released N-terminal domain (Gasdermin bGSDM, N-terminus). Precursor of a pore-forming protein involved in defense against bacteriophages. Cleavage of this precursor by its dedicated, neighboring protease (probably ISF6_0256) releases the active moiety (gasdermin bGSDM, N-terminus) which inserts into membranes, forming pores and triggering cell death. Functionally, pore-forming protein that causes membrane permeabilization via a pyroptosis-like activity. Makes ring-like pores with an interior pore diameter of 300-400 Angstroms, when integrated in liposomes. This is Gasdermin bGSDM from Piscinibacter sakaiensis (Ideonella sakaiensis).